A 562-amino-acid polypeptide reads, in one-letter code: Protein FAM83D-B (562 aa).

Positions 424–472 (ITTQTTETSQCTTQTPAPTSSVARLSNSSNSSSSSFSSASTTSTGSNCS) are disordered. Over residues 425–472 (TTQTTETSQCTTQTPAPTSSVARLSNSSNSSSSSFSSASTTSTGSNCS) the composition is skewed to low complexity.

It belongs to the FAM83 family.

It localises to the cytoplasm. The protein localises to the cytoskeleton. It is found in the spindle. The protein resides in the spindle pole. Functionally, may regulate cell proliferation, growth, migration and epithelial to mesenchymal transition. May also be important for proper chromosome congression and alignment during mitosis. This chain is Protein FAM83D-B, found in Xenopus laevis (African clawed frog).